A 117-amino-acid chain; its full sequence is Gamma-aminobutyric acid receptor-associated protein-like 2 (117 aa).

N6-acetyllysine is present on Lys-24. Phosphoserine occurs at positions 39, 87, and 88. A lipid anchor (Phosphatidylethanolamine amidated glycine; alternate) is attached at Gly-116. A lipid anchor (Phosphatidylserine amidated glycine; alternate) is attached at Gly-116. Position 117 (Phe-117) is a propeptide, removed in mature form.

The protein belongs to the ATG8 family. In terms of assembly, monomer. Interacts with ATG3, ATG7, ATG13 and ULK1. Interacts with TP53INP1 and TP53INP2. Interacts with TBC1D25. Directly interacts with SQSTM1 and BNIP3. Interacts with TECPR2 and PCM1. Interacts with TBC1D5. Interacts with TRIM5. Interacts with MEFV and TRIM21. Interacts with WDFY3. Interacts with UBA5; promoting recruitment of UBA5 to the endoplasmic reticulum membrane. Interacts with GOSR1. Interacts with KBTBD6 and KBTBD7; the interaction is direct. Interacts with reticulophagy regulators RETREG1, RETREG2 and RETREG3. Interacts with IRGM. Interacts with DNM2. Interacts with NCOA4. Interacts with IRGQ. In terms of processing, the precursor molecule is cleaved by ATG4 (ATG4A, ATG4B, ATG4C or ATG4D) to expose the glycine at the C-terminus and form the cytosolic form, GABARAPL2-I. The processed form is then activated by APG7L/ATG7, transferred to ATG3 and conjugated to phosphatidylethanolamine (PE) phospholipid to form the membrane-bound form, GABARAPL2-II. During non-canonical autophagy, the processed form is conjugated to phosphatidylserine (PS) phospholipid. ATG4 proteins also mediate the delipidation of PE-conjugated forms required for GABARAPL2 recycling when autophagosomes fuse with lysosomes. In addition, ATG4B and ATG4D mediate delipidation of ATG8 proteins conjugated to PS during non-canonical autophagy. ATG4B constitutes the major protein for proteolytic activation. ATG4D is the main enzyme for delipidation activity. Phosphorylation at Ser-87 and Ser-88 by TBK1 prevents interaction with ATG4 (ATG4A, ATG4B, ATG4C or ATG4D). Phosphorylation by TBK1 on autophagosomes prevents their delipidation by ATG4 and premature removal from nascent autophagosomes. Ubiquitous. Expressed at high levels in the brain, heart, prostate, ovary, spleen and skeletal muscle. Expressed at very low levels in lung, thymus and small intestine.

Its subcellular location is the cytoplasmic vesicle. It localises to the autophagosome. The protein localises to the endoplasmic reticulum membrane. The protein resides in the golgi apparatus. In terms of biological role, ubiquitin-like modifier involved in intra-Golgi traffic. Modulates intra-Golgi transport through coupling between NSF activity and SNAREs activation. It first stimulates the ATPase activity of NSF which in turn stimulates the association with GOSR1. Involved in autophagy. Plays a role in mitophagy which contributes to regulate mitochondrial quantity and quality by eliminating the mitochondria to a basal level to fulfill cellular energy requirements and preventing excess ROS production. Whereas LC3s are involved in elongation of the phagophore membrane, the GABARAP/GATE-16 subfamily is essential for a later stage in autophagosome maturation. The sequence is that of Gamma-aminobutyric acid receptor-associated protein-like 2 from Bos taurus (Bovine).